The sequence spans 463 residues: MSNDVDDESKIETKSYEAKDIVYKSKVFAFKDGEYRKAEILMIQKRTRGVVYYVHYNDYNKRLDEWITIDNIDLSKGIEYPPPEKPKKAHGKGKSSKRPKAVDRRRSITAPSKTEPSTPSTEKPEPSTPSGESDHGSNAGNESLPLLEEDHKPESLSKEQEVERLRFSGSMVQNPHEIARIRNINKICIGDHEIEPWYFSPYPKEFSEVDIVYICSFCFCYYGSERQFQRHREKCTLQHPPGNEIYRDDYISFFEIDGRKQRTWCRNICLLSKLFLDHKMLYYDVDPFLFYCMCRRDEYGCHLVGYFSKEKESSENYNLACILTLPQYQRHGYGKLLIQFSYELTKREHKHGSPEKPLSDLGLISYRAYWAEQIINLVLGMRTETTIDELANKTSMTTNDVLHTLQALNMLKYYKGQFIICISDGIEQQYERLKNKKRRRINGDLLADWQPPVFHPSQLRFGW.

Positions 22 to 74 (VYKSKVFAFKDGEYRKAEILMIQKRTRGVVYYVHYNDYNKRLDEWITIDNIDL) constitute a Tudor-knot domain. The disordered stretch occupies residues 76–145 (KGIEYPPPEK…GSNAGNESLP (70 aa)). Positions 87–99 (KKAHGKGKSSKRP) are enriched in basic residues. Positions 111-121 (PSKTEPSTPST) are enriched in low complexity. Positions 179-451 (ARIRNINKIC…NGDLLADWQP (273 aa)) constitute an MYST-type HAT domain. The C2HC MYST-type zinc-finger motif lies at 212-237 (VYICSFCFCYYGSERQFQRHREKCTL). Positions 262 to 283 (RTWCRNICLLSKLFLDHKMLYY) match the ESA1-RPD3 motif motif. Lysine 279 bears the N6-acetyllysine; by autocatalysis mark. Residues 320 to 324 (ACILT) and 329 to 335 (QRHGYGK) contribute to the acetyl-CoA site. The active-site Proton donor/acceptor is glutamate 355. Acetyl-CoA is bound at residue serine 359.

This sequence belongs to the MYST (SAS/MOZ) family. In terms of assembly, component of the NuA4 histone acetyltransferase complex. Interacts with arp4. Post-translationally, autoacetylation at Lys-279 is required for proper function.

The protein localises to the nucleus. It localises to the chromosome. The catalysed reaction is L-lysyl-[histone] + acetyl-CoA = N(6)-acetyl-L-lysyl-[histone] + CoA + H(+). The enzyme catalyses L-lysyl-[protein] + acetyl-CoA = N(6)-acetyl-L-lysyl-[protein] + CoA + H(+). It catalyses the reaction 2-hydroxyisobutanoyl-CoA + L-lysyl-[protein] = N(6)-(2-hydroxyisobutanoyl)-L-lysyl-[protein] + CoA + H(+). It carries out the reaction (2E)-butenoyl-CoA + L-lysyl-[protein] = N(6)-(2E)-butenoyl-L-lysyl-[protein] + CoA + H(+). In terms of biological role, catalytic component of the NuA4 histone acetyltransferase (HAT) complex which is involved in epigenetic transcriptional activation of selected genes principally by acetylation of nucleosomal histones H4, H3, H2B, H2A and H2A variant H2A.Z. Acetylates histone H4 to form H4K5ac, H4K8ac, H4K12ac and H4K16ac, histone H3 to form H3K14ac, and histone H2A to form H2AK4ac and H2AK7ac. The NuA4 complex is involved in the DNA damage response and is required for chromosome segregation. The NuA4 complex plays a direct role in repair of DNA double-strand breaks (DSBs) through homologous recombination. Recruitment to promoters depends on H3K4me. Also acetylates non-histone proteins. In addition to protein acetyltransferase, can use different acyl-CoA substrates, such as 2-hydroxyisobutanoyl-CoA (2-hydroxyisobutyryl-CoA) or (2E)-butenoyl-CoA (crotonyl-CoA), and is able to mediate protein 2-hydroxyisobutyrylation and crotonylation, respectively. This chain is Histone acetyltransferase mst1, found in Schizosaccharomyces pombe (strain 972 / ATCC 24843) (Fission yeast).